The primary structure comprises 192 residues: Potassium-transporting ATPase KdpC subunit (192 aa).

The helical transmembrane segment at proline 7–methionine 27 threads the bilayer.

This sequence belongs to the KdpC family. The system is composed of three essential subunits: KdpA, KdpB and KdpC.

The protein localises to the cell inner membrane. Functionally, part of the high-affinity ATP-driven potassium transport (or Kdp) system, which catalyzes the hydrolysis of ATP coupled with the electrogenic transport of potassium into the cytoplasm. This subunit acts as a catalytic chaperone that increases the ATP-binding affinity of the ATP-hydrolyzing subunit KdpB by the formation of a transient KdpB/KdpC/ATP ternary complex. The sequence is that of Potassium-transporting ATPase KdpC subunit from Paraburkholderia xenovorans (strain LB400).